The sequence spans 130 residues: MNLVFLWAALGGAIGSSLRYFVGKMMPSKFLMFESFPLGTFSVNLIGCFIIGFMGHLAAKKVFGDDFGIFFVTGVLGGFTTFSSYGLDTLKLLQKSQYLEAISYVLGTNLLGLIGVAIGWFLAKNFVGVN.

A run of 4 helical transmembrane segments spans residues 3–23 (LVFL…YFVG), 38–58 (LGTF…GHLA), 67–87 (FGIF…SYGL), and 102–122 (ISYV…GWFL). G77 and T80 together coordinate Na(+).

It belongs to the fluoride channel Fluc/FEX (TC 1.A.43) family.

It localises to the cell inner membrane. It carries out the reaction fluoride(in) = fluoride(out). Its activity is regulated as follows. Na(+) is not transported, but it plays an essential structural role and its presence is essential for fluoride channel function. Fluoride-specific ion channel. Important for reducing fluoride concentration in the cell, thus reducing its toxicity. The chain is Fluoride-specific ion channel FluC from Helicobacter pylori (strain J99 / ATCC 700824) (Campylobacter pylori J99).